Consider the following 102-residue polypeptide: UPF0147 protein MTH_1407 (102 aa).

Belongs to the UPF0147 family.

The polypeptide is UPF0147 protein MTH_1407 (Methanothermobacter thermautotrophicus (strain ATCC 29096 / DSM 1053 / JCM 10044 / NBRC 100330 / Delta H) (Methanobacterium thermoautotrophicum)).